A 313-amino-acid polypeptide reads, in one-letter code: Pantothenate synthetase (313 aa).

43–50 is a binding site for ATP; sequence MGALHEGH. His50 (proton donor) is an active-site residue. Residue Gln75 coordinates (R)-pantoate. Gln75 serves as a coordination point for beta-alanine. Position 161-164 (161-164) interacts with ATP; the sequence is GEKD. Position 167 (Gln167) interacts with (R)-pantoate. Residues Val190 and 198 to 201 contribute to the ATP site; that span reads LSSR.

Belongs to the pantothenate synthetase family. In terms of assembly, homodimer.

It localises to the cytoplasm. The enzyme catalyses (R)-pantoate + beta-alanine + ATP = (R)-pantothenate + AMP + diphosphate + H(+). Its pathway is cofactor biosynthesis; (R)-pantothenate biosynthesis; (R)-pantothenate from (R)-pantoate and beta-alanine: step 1/1. Functionally, catalyzes the condensation of pantoate with beta-alanine in an ATP-dependent reaction via a pantoyl-adenylate intermediate. The polypeptide is Pantothenate synthetase (Mycobacterium sp. (strain KMS)).